Reading from the N-terminus, the 347-residue chain is Dihydroorotase (347 aa).

Zn(2+) is bound by residues H14 and H16. Substrate contacts are provided by residues 16 to 18 and N42; that span reads HLR. 3 residues coordinate Zn(2+): K100, H137, and H175. K100 is subject to N6-carboxylysine. A substrate-binding site is contributed by H137. Residue L220 participates in substrate binding. Residue D248 coordinates Zn(2+). D248 is a catalytic residue. Positions 252 and 264 each coordinate substrate.

Belongs to the metallo-dependent hydrolases superfamily. DHOase family. Class II DHOase subfamily. Homodimer. The cofactor is Zn(2+).

It catalyses the reaction (S)-dihydroorotate + H2O = N-carbamoyl-L-aspartate + H(+). The protein operates within pyrimidine metabolism; UMP biosynthesis via de novo pathway; (S)-dihydroorotate from bicarbonate: step 3/3. Catalyzes the reversible cyclization of carbamoyl aspartate to dihydroorotate. The protein is Dihydroorotase of Pseudomonas syringae pv. syringae (strain B728a).